Here is a 321-residue protein sequence, read N- to C-terminus: UPF0676 protein C1494.01 (321 aa).

One can recognise a Fe2OG dioxygenase domain in the interval 159-267; that stretch reads EEDVLRLLKY…RQTIAYFVTP (109 aa).

This sequence belongs to the UPF0676 family.

The protein localises to the cytoplasm. The protein resides in the nucleus. This Schizosaccharomyces pombe (strain 972 / ATCC 24843) (Fission yeast) protein is UPF0676 protein C1494.01.